A 156-amino-acid chain; its full sequence is Histidine-containing phosphotransfer protein 2 (156 aa).

An N-acetylmethionine modification is found at Met1. The 108-residue stretch at 40–147 (SPDFVSEVLS…NLEKQIIQAG (108 aa)) folds into the HPt domain. The residue at position 82 (His82) is a Phosphohistidine.

As to quaternary structure, interacts with the B-type response regulators ARR1, ARR2 and ARR10. Binds to AHK1, AHK2, AHK3, AHK4, AHK5, ETR1 and CKI1. In terms of processing, two-component system major event consists of a His-to-Asp phosphorelay between a sensor histidine kinase (HK) and a response regulator (RR). In plants, the His-to-Asp phosphorelay involves an additional intermediate named Histidine-containing phosphotransfer protein (HPt). This multistep phosphorelay consists of a His-Asp-His-Asp sequential transfer of a phosphate group between first a His and an Asp of the HK protein, followed by the transfer to a conserved His of the HPt protein and finally the transfer to an Asp in the receiver domain of the RR protein. In terms of tissue distribution, strongly expressed in flowers and roots. Detected also in leaves, siliques and stems.

The protein resides in the cytoplasm. It localises to the cytosol. It is found in the nucleus. Its function is as follows. Functions as a two-component phosphorelay mediators between cytokinin sensor histidine kinases and response regulator (B-type ARRs). Plays an important role in propagating cytokinin signal transduction through the multistep His-to-Asp phosphorelay. The protein is Histidine-containing phosphotransfer protein 2 (AHP2) of Arabidopsis thaliana (Mouse-ear cress).